The following is a 268-amino-acid chain: Putative esterase/lipase 1 (268 aa).

The active site involves His27. Ser94 (charge relay system) is an active-site residue.

This sequence belongs to the lipase/esterase LIP3/BchO family.

This chain is Putative esterase/lipase 1, found in Mycoplasma genitalium (strain ATCC 33530 / DSM 19775 / NCTC 10195 / G37) (Mycoplasmoides genitalium).